We begin with the raw amino-acid sequence, 103 residues long: Trp operon repressor homolog (103 aa).

The DNA-binding element occupies 62-85 (QRKISELLGVGVATITRGSNELKH).

Belongs to the TrpR family. Homodimer.

It localises to the cytoplasm. This protein is an aporepressor. When complexed with L-tryptophan it binds the operator region of the trp operon and prevents the initiation of transcription. In Photobacterium profundum (strain SS9), this protein is Trp operon repressor homolog.